The sequence spans 418 residues: Gamma-glutamyl phosphate reductase (418 aa).

It belongs to the gamma-glutamyl phosphate reductase family.

It is found in the cytoplasm. It catalyses the reaction L-glutamate 5-semialdehyde + phosphate + NADP(+) = L-glutamyl 5-phosphate + NADPH + H(+). It functions in the pathway amino-acid biosynthesis; L-proline biosynthesis; L-glutamate 5-semialdehyde from L-glutamate: step 2/2. Catalyzes the NADPH-dependent reduction of L-glutamate 5-phosphate into L-glutamate 5-semialdehyde and phosphate. The product spontaneously undergoes cyclization to form 1-pyrroline-5-carboxylate. This is Gamma-glutamyl phosphate reductase from Moorella thermoacetica (strain ATCC 39073 / JCM 9320).